Reading from the N-terminus, the 724-residue chain is 1,4-alpha-glucan branching enzyme GlgB 1 (724 aa).

Asp-403 acts as the Nucleophile in catalysis. Glu-456 serves as the catalytic Proton donor.

Belongs to the glycosyl hydrolase 13 family. GlgB subfamily. Monomer.

The catalysed reaction is Transfers a segment of a (1-&gt;4)-alpha-D-glucan chain to a primary hydroxy group in a similar glucan chain.. Its pathway is glycan biosynthesis; glycogen biosynthesis. Functionally, catalyzes the formation of the alpha-1,6-glucosidic linkages in glycogen by scission of a 1,4-alpha-linked oligosaccharide from growing alpha-1,4-glucan chains and the subsequent attachment of the oligosaccharide to the alpha-1,6 position. The polypeptide is 1,4-alpha-glucan branching enzyme GlgB 1 (Xanthomonas campestris pv. campestris (strain 8004)).